A 315-amino-acid chain; its full sequence is D-alanine--D-alanine ligase B (315 aa).

Positions 109–309 constitute an ATP-grasp domain; sequence KKVAAAAGVV…FAELLSWMVE (201 aa). 135–190 provides a ligand contact to ATP; it reads PMKPPYVVKPVREGSSFGVVIVKEDQPHPPQVIGSADWKYGDEVMVEGYIAGRELT. Asp259, Glu276, and Asn278 together coordinate Mg(2+).

It belongs to the D-alanine--D-alanine ligase family. It depends on Mg(2+) as a cofactor. Mn(2+) serves as cofactor.

The protein resides in the cytoplasm. It carries out the reaction 2 D-alanine + ATP = D-alanyl-D-alanine + ADP + phosphate + H(+). The protein operates within cell wall biogenesis; peptidoglycan biosynthesis. Functionally, cell wall formation. This Brucella melitensis biotype 1 (strain ATCC 23456 / CCUG 17765 / NCTC 10094 / 16M) protein is D-alanine--D-alanine ligase B.